Reading from the N-terminus, the 220-residue chain is uncharacterized protein (220 aa).

Residues 10 to 30 (FFIIGGVILSIGLILFFLLGF) form a helical membrane-spanning segment.

Its subcellular location is the membrane. This is an uncharacterized protein from Methanocaldococcus jannaschii (strain ATCC 43067 / DSM 2661 / JAL-1 / JCM 10045 / NBRC 100440) (Methanococcus jannaschii).